The primary structure comprises 492 residues: 2,3-bisphosphoglycerate-independent phosphoglycerate mutase (492 aa).

Mn(2+) is bound by residues aspartate 11 and serine 61. Serine 61 serves as the catalytic Phosphoserine intermediate. Substrate contacts are provided by residues histidine 118, 147 to 148 (RD), arginine 178, arginine 184, 248 to 251 (RNDR), and lysine 320. Residues aspartate 386, histidine 390, aspartate 427, histidine 428, and histidine 445 each coordinate Mn(2+).

This sequence belongs to the BPG-independent phosphoglycerate mutase family. As to quaternary structure, monomer. Requires Mn(2+) as cofactor.

It catalyses the reaction (2R)-2-phosphoglycerate = (2R)-3-phosphoglycerate. Its pathway is carbohydrate degradation; glycolysis; pyruvate from D-glyceraldehyde 3-phosphate: step 3/5. In terms of biological role, catalyzes the interconversion of 2-phosphoglycerate and 3-phosphoglycerate. The sequence is that of 2,3-bisphosphoglycerate-independent phosphoglycerate mutase from Campylobacter jejuni subsp. jejuni serotype O:23/36 (strain 81-176).